Consider the following 430-residue polypeptide: Enolase (430 aa).

A (2R)-2-phosphoglycerate-binding site is contributed by Gln163. Glu205 serves as the catalytic Proton donor. Asp242, Glu288, and Asp315 together coordinate Mg(2+). (2R)-2-phosphoglycerate contacts are provided by Lys340, Arg369, Ser370, and Lys391. Lys340 functions as the Proton acceptor in the catalytic mechanism.

Belongs to the enolase family. Requires Mg(2+) as cofactor.

The protein resides in the cytoplasm. The protein localises to the secreted. It localises to the cell surface. It catalyses the reaction (2R)-2-phosphoglycerate = phosphoenolpyruvate + H2O. The protein operates within carbohydrate degradation; glycolysis; pyruvate from D-glyceraldehyde 3-phosphate: step 4/5. Catalyzes the reversible conversion of 2-phosphoglycerate (2-PG) into phosphoenolpyruvate (PEP). It is essential for the degradation of carbohydrates via glycolysis. The protein is Enolase of Acidobacterium capsulatum (strain ATCC 51196 / DSM 11244 / BCRC 80197 / JCM 7670 / NBRC 15755 / NCIMB 13165 / 161).